Here is a 53-residue protein sequence, read N- to C-terminus: Large ribosomal subunit protein bL32c (53 aa).

Belongs to the bacterial ribosomal protein bL32 family.

It localises to the plastid. Its subcellular location is the chloroplast. The polypeptide is Large ribosomal subunit protein bL32c (Coffea arabica (Arabian coffee)).